Consider the following 347-residue polypeptide: NADH-quinone oxidoreductase subunit H 1 (347 aa).

Transmembrane regions (helical) follow at residues 13–33 (IIMI…IAYV), 50–70 (PNVV…KFVF), 82–102 (AVFL…WAVV), 115–135 (VGIL…IMGG), 161–181 (IGFV…TDIV), 198–218 (FLDW…ISAL), 263–283 (CALT…IWIL), 286–306 (VPGI…FAMV), and 321–341 (LGWK…AFVL).

Belongs to the complex I subunit 1 family. As to quaternary structure, NDH-1 is composed of 14 different subunits. Subunits NuoA, H, J, K, L, M, N constitute the membrane sector of the complex.

It is found in the cell inner membrane. It carries out the reaction a quinone + NADH + 5 H(+)(in) = a quinol + NAD(+) + 4 H(+)(out). In terms of biological role, NDH-1 shuttles electrons from NADH, via FMN and iron-sulfur (Fe-S) centers, to quinones in the respiratory chain. The immediate electron acceptor for the enzyme in this species is believed to be ubiquinone. Couples the redox reaction to proton translocation (for every two electrons transferred, four hydrogen ions are translocated across the cytoplasmic membrane), and thus conserves the redox energy in a proton gradient. This subunit may bind ubiquinone. The chain is NADH-quinone oxidoreductase subunit H 1 from Rhizobium etli (strain ATCC 51251 / DSM 11541 / JCM 21823 / NBRC 15573 / CFN 42).